A 693-amino-acid polypeptide reads, in one-letter code: Translation factor GUF1 homolog, mitochondrial (693 aa).

A compositionally biased stretch (polar residues) spans 51-63 (SSSSTEKPTTSGT). Positions 51–78 (SSSSTEKPTTSGTINGGGGKQKAASQPK) are disordered. One can recognise a tr-type G domain in the interval 88 to 270 (QKIRNFSIIA…RIVQMVPPPP (183 aa)). GTP contacts are provided by residues 97-104 (AHIDHGKS), 163-167 (DTPGH), and 217-220 (NKID).

This sequence belongs to the TRAFAC class translation factor GTPase superfamily. Classic translation factor GTPase family. LepA subfamily.

Its subcellular location is the mitochondrion inner membrane. It catalyses the reaction GTP + H2O = GDP + phosphate + H(+). Its function is as follows. Promotes mitochondrial protein synthesis. May act as a fidelity factor of the translation reaction, by catalyzing a one-codon backward translocation of tRNAs on improperly translocated ribosomes. Binds to mitochondrial ribosomes in a GTP-dependent manner. The protein is Translation factor GUF1 homolog, mitochondrial of Phaeodactylum tricornutum (strain CCAP 1055/1).